Reading from the N-terminus, the 108-residue chain is MFSRVFAVASLAALALAGPLSVRDQCNTGTIQCCQQVQQASYYQSAFQEIGLGELLAGVTGQIGTQCSPISVVGASNGAQCNAQTVCCTNTQFNGLINIGCMPINVNA.

Residues 1 to 17 (MFSRVFAVASLAALALA) form the signal peptide. 4 cysteine pairs are disulfide-bonded: Cys26–Cys87, Cys33–Cys81, Cys34–Cys67, and Cys88–Cys101.

This sequence belongs to the fungal hydrophobin family. Self-assembles to form functional amyloid fibrils called rodlets. Self-assembly into fibrillar rodlets occurs spontaneously at hydrophobic:hydrophilic interfaces and the rodlets further associate laterally to form amphipathic monolayers.

The protein resides in the secreted. Its subcellular location is the cell wall. Aerial growth, conidiation, and dispersal of filamentous fungi in the environment rely upon a capability of their secreting small amphipathic proteins called hydrophobins (HPBs) with low sequence identity. Class I can self-assemble into an outermost layer of rodlet bundles on aerial cell surfaces, conferring cellular hydrophobicity that supports fungal growth, development and dispersal; whereas Class II form highly ordered films at water-air interfaces through intermolecular interactions but contribute nothing to the rodlet structure. The chain is Class I hydrophobin 3 from Pisolithus tinctorius (Dead man's foot).